A 171-amino-acid polypeptide reads, in one-letter code: ATP synthase subunit b (171 aa).

Residues 3–23 traverse the membrane as a helical segment; it reads KFLFFIFVFVGISFAGDDTAT.

It belongs to the ATPase B chain family. In terms of assembly, F-type ATPases have 2 components, F(1) - the catalytic core - and F(0) - the membrane proton channel. F(1) has five subunits: alpha(3), beta(3), gamma(1), delta(1), epsilon(1). F(0) has three main subunits: a(1), b(2) and c(10-14). The alpha and beta chains form an alternating ring which encloses part of the gamma chain. F(1) is attached to F(0) by a central stalk formed by the gamma and epsilon chains, while a peripheral stalk is formed by the delta and b chains.

The protein localises to the cell inner membrane. Functionally, f(1)F(0) ATP synthase produces ATP from ADP in the presence of a proton or sodium gradient. F-type ATPases consist of two structural domains, F(1) containing the extramembraneous catalytic core and F(0) containing the membrane proton channel, linked together by a central stalk and a peripheral stalk. During catalysis, ATP synthesis in the catalytic domain of F(1) is coupled via a rotary mechanism of the central stalk subunits to proton translocation. In terms of biological role, component of the F(0) channel, it forms part of the peripheral stalk, linking F(1) to F(0). This chain is ATP synthase subunit b, found in Campylobacter hominis (strain ATCC BAA-381 / DSM 21671 / CCUG 45161 / LMG 19568 / NCTC 13146 / CH001A).